A 298-amino-acid polypeptide reads, in one-letter code: Lipoyl synthase 1 (298 aa).

Residues C34, C39, C45, C60, C64, C67, and S274 each coordinate [4Fe-4S] cluster. The region spanning 46 to 263 (FYQGTATFLM…RRLGESMGFL (218 aa)) is the Radical SAM core domain.

This sequence belongs to the radical SAM superfamily. Lipoyl synthase family. Requires [4Fe-4S] cluster as cofactor.

Its subcellular location is the cytoplasm. The enzyme catalyses [[Fe-S] cluster scaffold protein carrying a second [4Fe-4S](2+) cluster] + N(6)-octanoyl-L-lysyl-[protein] + 2 oxidized [2Fe-2S]-[ferredoxin] + 2 S-adenosyl-L-methionine + 4 H(+) = [[Fe-S] cluster scaffold protein] + N(6)-[(R)-dihydrolipoyl]-L-lysyl-[protein] + 4 Fe(3+) + 2 hydrogen sulfide + 2 5'-deoxyadenosine + 2 L-methionine + 2 reduced [2Fe-2S]-[ferredoxin]. It participates in protein modification; protein lipoylation via endogenous pathway; protein N(6)-(lipoyl)lysine from octanoyl-[acyl-carrier-protein]: step 2/2. In terms of biological role, catalyzes the radical-mediated insertion of two sulfur atoms into the C-6 and C-8 positions of the octanoyl moiety bound to the lipoyl domains of lipoate-dependent enzymes, thereby converting the octanoylated domains into lipoylated derivatives. This Thermosynechococcus vestitus (strain NIES-2133 / IAM M-273 / BP-1) protein is Lipoyl synthase 1.